A 199-amino-acid chain; its full sequence is Glycerol-3-phosphate acyltransferase (199 aa).

The next 5 membrane-spanning stretches (helical) occupy residues 4 to 24 (FALFYMLFAYLLGSISSAILI), 56 to 76 (LAVLIFDMLKGMIPVWAGYYL), 80 to 100 (QFELGMVALGACLGHIFPIFF), 115 to 135 (IAPISWAVAGSMFGTWIFVFL), and 154 to 176 (YVWWFKPEFTFPVALVCCLLIYR).

It belongs to the PlsY family. In terms of assembly, probably interacts with PlsX.

It localises to the cell inner membrane. It carries out the reaction an acyl phosphate + sn-glycerol 3-phosphate = a 1-acyl-sn-glycero-3-phosphate + phosphate. It participates in lipid metabolism; phospholipid metabolism. Its function is as follows. Catalyzes the transfer of an acyl group from acyl-phosphate (acyl-PO(4)) to glycerol-3-phosphate (G3P) to form lysophosphatidic acid (LPA). This enzyme utilizes acyl-phosphate as fatty acyl donor, but not acyl-CoA or acyl-ACP. In Haemophilus influenzae (strain PittGG), this protein is Glycerol-3-phosphate acyltransferase.